The sequence spans 35 residues: Photosystem II reaction center protein T (35 aa).

Residues S3 to F23 traverse the membrane as a helical segment.

It belongs to the PsbT family. PSII is composed of 1 copy each of membrane proteins PsbA, PsbB, PsbC, PsbD, PsbE, PsbF, PsbH, PsbI, PsbJ, PsbK, PsbL, PsbM, PsbT, PsbX, PsbY, PsbZ, Psb30/Ycf12, peripheral proteins PsbO, CyanoQ (PsbQ), PsbU, PsbV and a large number of cofactors. It forms dimeric complexes.

The protein resides in the cellular thylakoid membrane. Functionally, found at the monomer-monomer interface of the photosystem II (PS II) dimer, plays a role in assembly and dimerization of PSII. PSII is a light-driven water plastoquinone oxidoreductase, using light energy to abstract electrons from H(2)O, generating a proton gradient subsequently used for ATP formation. This Nostoc punctiforme (strain ATCC 29133 / PCC 73102) protein is Photosystem II reaction center protein T.